A 138-amino-acid polypeptide reads, in one-letter code: Lutropin subunit beta (138 aa).

A signal peptide spans 1-19 (RYQELTVLLLLLLEGGSWG). 6 disulfides stabilise this stretch: C27/C75, C41/C90, C44/C128, C52/C106, C56/C108, and C111/C118. The N-linked (GlcNAc...) asparagine glycan is linked to N31.

It belongs to the glycoprotein hormones subunit beta family. As to quaternary structure, heterodimer of a common alpha chain and a unique beta chain which confers biological specificity to thyrotropin, lutropin, follitropin and gonadotropin.

Its subcellular location is the secreted. Its function is as follows. Promotes spermatogenesis and ovulation by stimulating the testes and ovaries to synthesize steroids. This is Lutropin subunit beta (LHB) from Osphranter rufus (Red kangaroo).